The following is a 313-amino-acid chain: uncharacterized protein (313 aa).

This is an uncharacterized protein from Bacillus subtilis (strain 168).